A 631-amino-acid polypeptide reads, in one-letter code: ATP-dependent zinc metalloprotease FtsH (631 aa).

The Stromal portion of the chain corresponds to Met-1–Lys-2. Residues Ile-3 to Trp-23 form a helical membrane-spanning segment. At Gln-24–Ala-118 the chain is on the lumenal side. The chain crosses the membrane as a helical span at residues Trp-119–Phe-139. At Arg-140–Thr-631 the chain is on the stromal side. Gly-213 to Thr-220 is an ATP binding site. His-434 contributes to the Zn(2+) binding site. Glu-435 is an active-site residue. Positions 438 and 512 each coordinate Zn(2+).

This sequence in the central section; belongs to the AAA ATPase family. The protein in the C-terminal section; belongs to the peptidase M41 family. In terms of assembly, homohexamer. It depends on Zn(2+) as a cofactor.

Its subcellular location is the plastid. The protein localises to the chloroplast thylakoid membrane. Its function is as follows. Acts as a processive, ATP-dependent zinc metallopeptidase. This Guillardia theta (Cryptophyte) protein is ATP-dependent zinc metalloprotease FtsH.